Consider the following 140-residue polypeptide: uncharacterized protein (140 aa).

Residues 34-88 form a disordered region; the sequence is PLRWRNRARNREKPHSPRAVSSPATHSLPPSNPCRLTPTLSSARPREGSCPSKCS.

Expressed in a range of cell lines, including B-cell lymphoma and prostate.

This is an uncharacterized protein from Homo sapiens (Human).